A 164-amino-acid polypeptide reads, in one-letter code: Protein SprT (164 aa).

In terms of domain architecture, SprT-like spans 13–156; sequence YQQAEAFFKR…LCKRCREILV (144 aa). A Zn(2+)-binding site is contributed by histidine 69. Residue glutamate 70 is part of the active site. Residue histidine 73 coordinates Zn(2+).

The protein belongs to the SprT family. Zn(2+) is required as a cofactor.

The protein localises to the cytoplasm. This Pseudomonas putida (strain ATCC 700007 / DSM 6899 / JCM 31910 / BCRC 17059 / LMG 24140 / F1) protein is Protein SprT.